Here is a 197-residue protein sequence, read N- to C-terminus: dTTP/UTP pyrophosphatase (197 aa).

Asp70 (proton acceptor) is an active-site residue.

The protein belongs to the Maf family. YhdE subfamily. It depends on a divalent metal cation as a cofactor.

The protein resides in the cytoplasm. The enzyme catalyses dTTP + H2O = dTMP + diphosphate + H(+). It carries out the reaction UTP + H2O = UMP + diphosphate + H(+). Nucleoside triphosphate pyrophosphatase that hydrolyzes dTTP and UTP. May have a dual role in cell division arrest and in preventing the incorporation of modified nucleotides into cellular nucleic acids. The chain is dTTP/UTP pyrophosphatase (yceF) from Shigella dysenteriae serotype 1 (strain Sd197).